We begin with the raw amino-acid sequence, 241 residues long: Chaperone protein FimC (241 aa).

Residues 1–36 (MSNKNVNVRKSQEITFCLLAGILMFMAMVVAGRAEA) form the signal peptide.

The protein belongs to the periplasmic pilus chaperone family.

The protein resides in the periplasm. Its function is as follows. Required for the biogenesis of type 1 fimbriae. Binds and interact with FimH. The protein is Chaperone protein FimC (fimC) of Escherichia coli O6:H1 (strain CFT073 / ATCC 700928 / UPEC).